A 1399-amino-acid chain; its full sequence is DNA-directed RNA polymerase subunit beta' (1399 aa).

4 residues coordinate Zn(2+): Cys-70, Cys-72, Cys-85, and Cys-88. Mg(2+)-binding residues include Asp-460, Asp-462, and Asp-464. 4 residues coordinate Zn(2+): Cys-814, Cys-888, Cys-895, and Cys-898.

It belongs to the RNA polymerase beta' chain family. The RNAP catalytic core consists of 2 alpha, 1 beta, 1 beta' and 1 omega subunit. When a sigma factor is associated with the core the holoenzyme is formed, which can initiate transcription. Requires Mg(2+) as cofactor. Zn(2+) is required as a cofactor.

The catalysed reaction is RNA(n) + a ribonucleoside 5'-triphosphate = RNA(n+1) + diphosphate. Its function is as follows. DNA-dependent RNA polymerase catalyzes the transcription of DNA into RNA using the four ribonucleoside triphosphates as substrates. In Pseudomonas savastanoi pv. phaseolicola (strain 1448A / Race 6) (Pseudomonas syringae pv. phaseolicola (strain 1448A / Race 6)), this protein is DNA-directed RNA polymerase subunit beta'.